A 147-amino-acid chain; its full sequence is Prefoldin subunit alpha (147 aa).

Belongs to the prefoldin alpha subunit family. In terms of assembly, heterohexamer of two alpha and four beta subunits.

Its subcellular location is the cytoplasm. Molecular chaperone capable of stabilizing a range of proteins. Seems to fulfill an ATP-independent, HSP70-like function in archaeal de novo protein folding. The chain is Prefoldin subunit alpha from Saccharolobus islandicus (strain L.S.2.15 / Lassen #1) (Sulfolobus islandicus).